The following is a 198-amino-acid chain: Pyridoxal 5'-phosphate synthase subunit PdxT (198 aa).

49–51 (GES) serves as a coordination point for L-glutamine. Catalysis depends on Cys81, which acts as the Nucleophile. Residues Arg113 and 141 to 142 (IR) contribute to the L-glutamine site. Residues His177 and Glu179 each act as charge relay system in the active site.

This sequence belongs to the glutaminase PdxT/SNO family. As to quaternary structure, in the presence of PdxS, forms a dodecamer of heterodimers. Only shows activity in the heterodimer.

The enzyme catalyses aldehydo-D-ribose 5-phosphate + D-glyceraldehyde 3-phosphate + L-glutamine = pyridoxal 5'-phosphate + L-glutamate + phosphate + 3 H2O + H(+). It catalyses the reaction L-glutamine + H2O = L-glutamate + NH4(+). It participates in cofactor biosynthesis; pyridoxal 5'-phosphate biosynthesis. Its function is as follows. Catalyzes the hydrolysis of glutamine to glutamate and ammonia as part of the biosynthesis of pyridoxal 5'-phosphate. The resulting ammonia molecule is channeled to the active site of PdxS. The protein is Pyridoxal 5'-phosphate synthase subunit PdxT of Mycobacterium tuberculosis (strain ATCC 25177 / H37Ra).